A 54-amino-acid chain; its full sequence is Sec-independent protein translocase protein TatA (54 aa).

The chain crosses the membrane as a helical span at residues 1–21 (MGMSFSHLLIVLLIIFVLFGA).

It belongs to the TatA/E family. As to quaternary structure, the Tat system comprises two distinct complexes: a TatABC complex, containing multiple copies of TatA, TatB and TatC subunits, and a separate TatA complex, containing only TatA subunits. Substrates initially bind to the TatABC complex, which probably triggers association of the separate TatA complex to form the active translocon.

Its subcellular location is the cell inner membrane. Part of the twin-arginine translocation (Tat) system that transports large folded proteins containing a characteristic twin-arginine motif in their signal peptide across membranes. TatA could form the protein-conducting channel of the Tat system. The polypeptide is Sec-independent protein translocase protein TatA (Rickettsia canadensis (strain McKiel)).